A 641-amino-acid chain; its full sequence is uncharacterized protein (641 aa).

Serine 112 bears the Phosphoserine mark. Disordered stretches follow at residues 118-243, 261-289, 355-386, and 404-430; these read STSI…LDPT, KSPR…TVSI, DKSD…RLEA, and DGEG…QSHS. Residues 132 to 162 show a composition bias toward polar residues; it reads ASVSSQYPHRTFQKQVNKTCVSKSDGPSGNG. Position 198 is a phosphoserine (serine 198). 2 stretches are compositionally biased toward polar residues: residues 222-234 and 278-289; these read NQEL…SRSN and RQASSAGDTVSI. Positions 355-368 are enriched in basic and acidic residues; sequence DKSDGDQREEDCVR. 2 stretches are compositionally biased toward low complexity: residues 374–383 and 421–430; these read RSSSPTSPTR and SSSAAVQSHS.

This is an uncharacterized protein from Mus musculus (Mouse).